The sequence spans 116 residues: Large ribosomal subunit protein bL20 (116 aa).

This sequence belongs to the bacterial ribosomal protein bL20 family.

In terms of biological role, binds directly to 23S ribosomal RNA and is necessary for the in vitro assembly process of the 50S ribosomal subunit. It is not involved in the protein synthesizing functions of that subunit. The protein is Large ribosomal subunit protein bL20 of Bacteroides thetaiotaomicron (strain ATCC 29148 / DSM 2079 / JCM 5827 / CCUG 10774 / NCTC 10582 / VPI-5482 / E50).